A 354-amino-acid chain; its full sequence is Kelch domain-containing protein 8B (354 aa).

8 Kelch repeats span residues 1-31, 32-79, 81-127, 128-175, 176-222, 224-281, 282-329, and 331-354; these read MAAGGGQAFAWQVFPPMPTCRVYGTVAHQDG, HLLV…VLGK, VLVV…ERDG, MVYA…LHGN, KIYV…MAEG, VFSL…SLGG, NIVA…QAGP, and LFVIGGVAQGPSQAVEALCLRDGV.

It is found in the cytoplasm. It localises to the midbody. Its function is as follows. Involved in pinching off the separated nuclei at the cleavage furrow and in cytokinesis. Required for mitotic integrity and maintenance of chromosomal stability. Protects cells against mitotic errors, centrosomal amplification, micronucleus formation and aneuploidy. Plays a key role of midbody function involving abscission of the daughter cells during cytokinesis and appropriate chromosomal and nuclear segregation into the daughter cells. The chain is Kelch domain-containing protein 8B (Klhdc8b) from Rattus norvegicus (Rat).